Here is a 520-residue protein sequence, read N- to C-terminus: Erythritol kinase (520 aa).

This sequence belongs to the FGGY kinase family.

The enzyme catalyses erythritol + ATP = D-erythritol 1-phosphate + ADP + H(+). Its pathway is carbohydrate metabolism; erythritol degradation. Functionally, catalyzes the phosphorylation of erythritol to D-erythritol-1-phosphate. The polypeptide is Erythritol kinase (Brucella abortus (strain 2308)).